The sequence spans 279 residues: NAD kinase (279 aa).

Asp61 acts as the Proton acceptor in catalysis. NAD(+) contacts are provided by residues 61–62 (DG), 138–139 (ND), Lys149, Lys166, Asp168, and 179–184 (TGYSFS).

This sequence belongs to the NAD kinase family. It depends on a divalent metal cation as a cofactor.

It is found in the cytoplasm. The catalysed reaction is NAD(+) + ATP = ADP + NADP(+) + H(+). Involved in the regulation of the intracellular balance of NAD and NADP, and is a key enzyme in the biosynthesis of NADP. Catalyzes specifically the phosphorylation on 2'-hydroxyl of the adenosine moiety of NAD to yield NADP. The chain is NAD kinase from Borreliella burgdorferi (strain ATCC 35210 / DSM 4680 / CIP 102532 / B31) (Borrelia burgdorferi).